The sequence spans 137 residues: Small ribosomal subunit protein uS9 (137 aa).

Over residues 106–117 the composition is skewed to basic and acidic residues; that stretch reads KTEGYLTRDPRA. Residues 106–137 form a disordered region; sequence KTEGYLTRDPRAKERRKYGLRKARKAPQYSKR. Positions 118–137 are enriched in basic residues; that stretch reads KERRKYGLRKARKAPQYSKR.

It belongs to the universal ribosomal protein uS9 family.

This is Small ribosomal subunit protein uS9 from Thermosynechococcus vestitus (strain NIES-2133 / IAM M-273 / BP-1).